A 237-amino-acid polypeptide reads, in one-letter code: Ribonuclease 3 (237 aa).

The 127-residue stretch at 4–130 folds into the RNase III domain; sequence IQILFQTLNI…LFGAIYLDLG (127 aa). Position 45 (Glu-45) interacts with Mg(2+). Asp-49 is an active-site residue. Mg(2+) contacts are provided by Asp-116 and Glu-119. Residue Glu-119 is part of the active site. The DRBM domain maps to 154 to 222; it reads DFKTQLQEIV…AQQALSKVAK (69 aa).

Belongs to the ribonuclease III family. In terms of assembly, homodimer. Mg(2+) serves as cofactor.

It is found in the cytoplasm. The catalysed reaction is Endonucleolytic cleavage to 5'-phosphomonoester.. Digests double-stranded RNA. Involved in the processing of primary rRNA transcript to yield the immediate precursors to the large and small rRNAs (23S and 16S). Processes some mRNAs, and tRNAs when they are encoded in the rRNA operon. Processes pre-crRNA and tracrRNA of type II CRISPR loci if present in the organism. In Aster yellows witches'-broom phytoplasma (strain AYWB), this protein is Ribonuclease 3.